The sequence spans 984 residues: Valine--tRNA ligase (984 aa).

The 'HIGH' region signature appears at 65 to 75 (PNVTGSLHMGH). A 'KMSKS' region motif is present at residues 579-583 (KMSKS). Lysine 582 contacts ATP. Residues 954-984 (VEVVDAEKAKLAELEGQLTAMTAQMEELKNL) adopt a coiled-coil conformation.

This sequence belongs to the class-I aminoacyl-tRNA synthetase family. ValS type 1 subfamily. Monomer.

Its subcellular location is the cytoplasm. It catalyses the reaction tRNA(Val) + L-valine + ATP = L-valyl-tRNA(Val) + AMP + diphosphate. In terms of biological role, catalyzes the attachment of valine to tRNA(Val). As ValRS can inadvertently accommodate and process structurally similar amino acids such as threonine, to avoid such errors, it has a 'posttransfer' editing activity that hydrolyzes mischarged Thr-tRNA(Val) in a tRNA-dependent manner. The chain is Valine--tRNA ligase from Psychrobacter arcticus (strain DSM 17307 / VKM B-2377 / 273-4).